Reading from the N-terminus, the 479-residue chain is Aspartyl/glutamyl-tRNA(Asn/Gln) amidotransferase subunit B (479 aa).

It belongs to the GatB/GatE family. GatB subfamily. Heterotrimer of A, B and C subunits.

The catalysed reaction is L-glutamyl-tRNA(Gln) + L-glutamine + ATP + H2O = L-glutaminyl-tRNA(Gln) + L-glutamate + ADP + phosphate + H(+). The enzyme catalyses L-aspartyl-tRNA(Asn) + L-glutamine + ATP + H2O = L-asparaginyl-tRNA(Asn) + L-glutamate + ADP + phosphate + 2 H(+). In terms of biological role, allows the formation of correctly charged Asn-tRNA(Asn) or Gln-tRNA(Gln) through the transamidation of misacylated Asp-tRNA(Asn) or Glu-tRNA(Gln) in organisms which lack either or both of asparaginyl-tRNA or glutaminyl-tRNA synthetases. The reaction takes place in the presence of glutamine and ATP through an activated phospho-Asp-tRNA(Asn) or phospho-Glu-tRNA(Gln). This is Aspartyl/glutamyl-tRNA(Asn/Gln) amidotransferase subunit B from Geotalea daltonii (strain DSM 22248 / JCM 15807 / FRC-32) (Geobacter daltonii).